The sequence spans 295 residues: Aspartate carbamoyltransferase catalytic subunit (295 aa).

Residues R49 and T50 each coordinate carbamoyl phosphate. L-aspartate is bound at residue K77. Residues R99, H127, and Q130 each contribute to the carbamoyl phosphate site. Positions 161 and 212 each coordinate L-aspartate. 2 residues coordinate carbamoyl phosphate: G251 and P252.

It belongs to the aspartate/ornithine carbamoyltransferase superfamily. ATCase family. As to quaternary structure, heterododecamer (2C3:3R2) of six catalytic PyrB chains organized as two trimers (C3), and six regulatory PyrI chains organized as three dimers (R2).

It carries out the reaction carbamoyl phosphate + L-aspartate = N-carbamoyl-L-aspartate + phosphate + H(+). It functions in the pathway pyrimidine metabolism; UMP biosynthesis via de novo pathway; (S)-dihydroorotate from bicarbonate: step 2/3. Its function is as follows. Catalyzes the condensation of carbamoyl phosphate and aspartate to form carbamoyl aspartate and inorganic phosphate, the committed step in the de novo pyrimidine nucleotide biosynthesis pathway. In Campylobacter jejuni subsp. jejuni serotype O:6 (strain 81116 / NCTC 11828), this protein is Aspartate carbamoyltransferase catalytic subunit.